The following is a 449-amino-acid chain: GTPase Der (449 aa).

EngA-type G domains are found at residues 4–169 and 177–353; these read PIVA…PAGE and IQVA…EQHR. GTP is bound by residues 10-17, 57-61, 120-123, 183-190, 230-234, and 295-298; these read GRPNVGKS, DTGGL, NKCE, DTAGI, and NKWD. The 86-residue stretch at 354-439 folds into the KH-like domain; sequence RRVTTAVVND…PIRLLWRSKK (86 aa).

Belongs to the TRAFAC class TrmE-Era-EngA-EngB-Septin-like GTPase superfamily. EngA (Der) GTPase family. As to quaternary structure, associates with the 50S ribosomal subunit.

Its function is as follows. GTPase that plays an essential role in the late steps of ribosome biogenesis. The chain is GTPase Der from Thermosynechococcus vestitus (strain NIES-2133 / IAM M-273 / BP-1).